The chain runs to 554 residues: MASSQVGDMVNGNAEPTRHLAKFPPSLWGDRFTSFTLDKQLWDKYGNEIEVLKEQVRSMVVAGGRKAAEQINLINVLERLGVSYHFEKEIEEQLEQLFAKFEDNEDYDLFTIALHFRIFRQHGYKMSCDVFNKFRDSNGEFKETVSNDVQGMLSLYEATYLKIRGEGFLDEAHAFTIAQLESLVGGPHLSSDLSEQVMHALKQSIHRGFPRLEAKHFISFYEKDASRNETLLRLAKLDFNQLQLSHREELCHIFRWWKELDLISKVPYARDRAVECFFWSTCAYYEPQHSVGRAVLTKIMLLLSVTDDTYDAYGTYDELKLYTNAVQRWDVSAMDELPDYMKALYRALLNVYDEVERDLAKQGRDYGVHHSKEAFKEIVRSYEIEAEWFKEGYVASFEEYMKNALVTSTGRLHTTSCFMGLEADVATTEAFEWILTKPKMVAASGAIGRLVDDVMSHDEEQERGHVATGLDCYMKQHGVSKQEAIVELYKMIENAWRDINEEMLKPTAISMKLLIRVLNLSRISDVVYKYVDGYTHPEIIKDHVISLFEDPIPM.

The DDXXD motif motif lies at 288–292 (QHSVG). Positions 307, 311, 452, 456, and 460 each coordinate Mg(2+).

This sequence belongs to the terpene synthase family. The cofactor is Mg(2+).

The catalysed reaction is (2E,6E)-farnesyl diphosphate + H2O = valerianol + diphosphate. It participates in secondary metabolite biosynthesis; terpenoid biosynthesis. Terpene synthase that catalyzes the biosynthesis of the terpene valerianol. The polypeptide is Valerianol synthase TPS8 (Camellia sinensis (Tea plant)).